A 524-amino-acid polypeptide reads, in one-letter code: GMP synthase [glutamine-hydrolyzing] (524 aa).

A Glutamine amidotransferase type-1 domain is found at 9 to 207 (RILILDFGSQ…VIHICQCIPN (199 aa)). The active-site Nucleophile is the cysteine 86. Residues histidine 181 and glutamate 183 contribute to the active site. The 192-residue stretch at 208 to 399 (WTTKHIIEDS…LGLPADLIYR (192 aa)) folds into the GMPS ATP-PPase domain. 235–241 (SGGVDSA) contributes to the ATP binding site.

As to quaternary structure, homodimer.

It carries out the reaction XMP + L-glutamine + ATP + H2O = GMP + L-glutamate + AMP + diphosphate + 2 H(+). It functions in the pathway purine metabolism; GMP biosynthesis; GMP from XMP (L-Gln route): step 1/1. Catalyzes the synthesis of GMP from XMP. The chain is GMP synthase [glutamine-hydrolyzing] from Coxiella burnetii (strain CbuK_Q154) (Coxiella burnetii (strain Q154)).